A 226-amino-acid polypeptide reads, in one-letter code: MKNLFFNKLQKKMGYLFHNNIILKQALTHRSFSSKNNERLEFLGDSILNYIISDALYNNFTNIPEGKLSQMRSYLVRGNTLAEIAREFCLGDYLILGIGEVKTGGKNRDSILSNAMEAIIGGIFLDSNINKTHEIVISWYKNRLYSMSLKNLKKDPKTRLQEYLQGNKFSLPQYYIKNITGESHNQEFTICCFIDDLKKSVIGYGKTRRKAEQSAAKQALLLFNIL.

Residues 6 to 128 enclose the RNase III domain; sequence FNKLQKKMGY…IIGGIFLDSN (123 aa). Residue E41 coordinates Mg(2+). The active site involves D45. 2 residues coordinate Mg(2+): N114 and E117. E117 is an active-site residue. The region spanning 155 to 225 is the DRBM domain; that stretch reads DPKTRLQEYL…AKQALLLFNI (71 aa).

Belongs to the ribonuclease III family. As to quaternary structure, homodimer. It depends on Mg(2+) as a cofactor.

The protein resides in the cytoplasm. The enzyme catalyses Endonucleolytic cleavage to 5'-phosphomonoester.. Digests double-stranded RNA. Involved in the processing of primary rRNA transcript to yield the immediate precursors to the large and small rRNAs (23S and 16S). Processes some mRNAs, and tRNAs when they are encoded in the rRNA operon. Processes pre-crRNA and tracrRNA of type II CRISPR loci if present in the organism. This Wigglesworthia glossinidia brevipalpis protein is Ribonuclease 3.